Here is a 261-residue protein sequence, read N- to C-terminus: TM2 domain-containing protein 3 (261 aa).

The N-terminal stretch at 1-44 (MEAAAEPLRSVRHLSRVLLFLSQCYILSGDGSLNLEHSQPLAQA) is a signal peptide. The Extracellular segment spans residues 45 to 193 (IKDPGPTRTF…RTFPKLLYCN (149 aa)). Residues asparagine 101, asparagine 136, asparagine 154, asparagine 171, asparagine 183, and asparagine 193 are each glycosylated (N-linked (GlcNAc...) asparagine). A helical transmembrane segment spans residues 194–214 (WTGGYKWSTALALSITLGGFG). The region spanning 197-244 (GYKWSTALALSITLGGFGADRFYLGQWREGLGKLFSFGGLGIWTLIDV) is the TM2 domain. The Cytoplasmic portion of the chain corresponds to 215–229 (ADRFYLGQWREGLGK). A helical transmembrane segment spans residues 230–250 (LFSFGGLGIWTLIDVLLIGVG). Residues 251-261 (YVGPADGSLYI) lie on the Extracellular side of the membrane.

Belongs to the TM2 family.

The protein resides in the membrane. The polypeptide is TM2 domain-containing protein 3 (Tm2d3) (Mus musculus (Mouse)).